The chain runs to 347 residues: N-acetyl-gamma-glutamyl-phosphate reductase (347 aa).

Residue Cys152 is part of the active site.

The protein belongs to the NAGSA dehydrogenase family. Type 1 subfamily.

The protein resides in the cytoplasm. The enzyme catalyses N-acetyl-L-glutamate 5-semialdehyde + phosphate + NADP(+) = N-acetyl-L-glutamyl 5-phosphate + NADPH + H(+). The protein operates within amino-acid biosynthesis; L-arginine biosynthesis; N(2)-acetyl-L-ornithine from L-glutamate: step 3/4. Its function is as follows. Catalyzes the NADPH-dependent reduction of N-acetyl-5-glutamyl phosphate to yield N-acetyl-L-glutamate 5-semialdehyde. This is N-acetyl-gamma-glutamyl-phosphate reductase from Ehrlichia ruminantium (strain Gardel).